A 206-amino-acid chain; its full sequence is Phosphoserine phosphatase (206 aa).

Aspartate 7 serves as the catalytic Nucleophile. Mg(2+)-binding residues include aspartate 7 and aspartate 9. Aspartate 9 acts as the Proton donor in catalysis. Substrate contacts are provided by residues glutamate 16, arginine 52, 95–96 (SG), and lysine 140. A Mg(2+)-binding site is contributed by aspartate 163. Asparagine 166 is a binding site for substrate.

Belongs to the HAD-like hydrolase superfamily. SerB family. The cofactor is Mg(2+).

It carries out the reaction O-phospho-L-serine + H2O = L-serine + phosphate. The catalysed reaction is O-phospho-D-serine + H2O = D-serine + phosphate. Its pathway is amino-acid biosynthesis; L-serine biosynthesis; L-serine from 3-phospho-D-glycerate: step 3/3. The chain is Phosphoserine phosphatase from Wolinella succinogenes (strain ATCC 29543 / DSM 1740 / CCUG 13145 / JCM 31913 / LMG 7466 / NCTC 11488 / FDC 602W) (Vibrio succinogenes).